A 443-amino-acid chain; its full sequence is MISLAVFPSDFLRSTRSVFLCGDSNLDLTSSVEQCRSRTRDLRTPRRKRDRIPCLNAVGDKFLQVESFSRDEAFSTWNSHCRPLCVVSFVPSQSSVVFSDLSLQAALSRPASACLLCLRVSRVSTFLFRFSAMAKLSSAPRVLVLSAEDSVVSAADASKKDTVLTVLHPDTIIENAADAPSVLYDGVLILDAGKSRENATGNSQGKSAEFAAARSALQAFAQAVCRLVAAGGFVFLAGGSGEREEVHRLVKRLLIYEGLVSAQDSEVAAFVADHLPRVDSSLMWTGRKPTWAAGVADALSGNRGALPNGTAQTDGDDFIDESTLIDPTESYQPLGKDRSSCASRPKACPNCTCGRKEAEEAAEKEERRRKLETGEIRSSCGNCYLGDAFRCAGCPYRGMPAFKPGEKVSLEATSVEAPGGGMQKQVATVMSNKVQITDLGDDM.

Positions 136–301 are N-terminal SAM-like domain; sequence LSSAPRVLVL…AAGVADALSG (166 aa). A linker region spans residues 302–331; the sequence is NRGALPNGTAQTDGDDFIDESTLIDPTESY. 4 residues coordinate [2Fe-2S] cluster: Cys341, Cys348, Cys351, and Cys353. Residues 341–353 are fe-S binding site A; the sequence is CASRPKACPNCTC. [4Fe-4S] cluster-binding residues include Cys380, Cys383, Cys391, and Cys394. 2 short sequence motifs (cx2C motif) span residues 380–383 and 391–394; these read CGNC and CAGC. A fe-S binding site B region spans residues 380-394; sequence CGNCYLGDAFRCAGC.

The protein belongs to the anamorsin family. In terms of assembly, monomer. It depends on [2Fe-2S] cluster as a cofactor. The cofactor is [4Fe-4S] cluster.

Its subcellular location is the cytoplasm. It localises to the mitochondrion intermembrane space. Functionally, component of the cytosolic iron-sulfur (Fe-S) protein assembly (CIA) machinery. Required for the maturation of extramitochondrial Fe-S proteins. Part of an electron transfer chain functioning in an early step of cytosolic Fe-S biogenesis, facilitating the de novo assembly of a [4Fe-4S] cluster on the cytosolic Fe-S scaffold complex. Electrons are transferred from NADPH via a FAD- and FMN-containing diflavin oxidoreductase. Together with the diflavin oxidoreductase, also required for the assembly of the diferric tyrosyl radical cofactor of ribonucleotide reductase (RNR), probably by providing electrons for reduction during radical cofactor maturation in the catalytic small subunit. In Toxoplasma gondii (strain ATCC 50861 / VEG), this protein is Anamorsin homolog.